The primary structure comprises 1134 residues: Phospholipid-transporting ATPase IH (1134 aa).

At 1–61 (MDCSLVRTLV…SSKYTFWNFI (61 aa)) the chain is on the cytoplasmic side. A helical membrane pass occupies residues 62 to 82 (PKNLFEQFRRVANFYFLIIFL). The Extracellular portion of the chain corresponds to 83 to 88 (VQLIID). A helical membrane pass occupies residues 89–110 (TPTSPVTSGLPLFFVITVTAIK). The Cytoplasmic portion of the chain corresponds to 111-296 (QGYEDWLRHK…SAVEKSMNAF (186 aa)). The chain crosses the membrane as a helical span at residues 297–318 (LIVYLCILISKALINTVLKYMW). Over 319–349 (QSEPFRDEPWYNQKTESERQRNLFLKAFTDF) the chain is Extracellular. The helical transmembrane segment at 350–372 (LAFMVLFNYIIPVSMYVTVEMQK) threads the bilayer. The Cytoplasmic portion of the chain corresponds to 373-881 (FLGSYFITWD…GHFYYIRISE (509 aa)). D414 acts as the 4-aspartylphosphate intermediate in catalysis. 10 residues coordinate ATP: D414, K415, T416, E511, F553, K576, R607, T687, G688, and D689. D414 serves as a coordination point for Mg(2+). T416 contacts Mg(2+). S738 bears the Phosphoserine mark. Residues R798 and K804 each coordinate ATP. Residue D825 participates in Mg(2+) binding. Residues N828 and D829 each coordinate ATP. D829 is a Mg(2+) binding site. The helical transmembrane segment at 882 to 902 (LVQYFFYKNVCFIFPQFLYQF) threads the bilayer. At 903–914 (FCGFSQQTLYDT) the chain is on the extracellular side. Residues 915–934 (AYLTLYNISFTSLPILLYSL) form a helical membrane-spanning segment. The Cytoplasmic segment spans residues 935–964 (MEQHVGIDVLKRDPTLYRDVAKNALLRWRV). A helical membrane pass occupies residues 965 to 986 (FIYWTLLGLFDALVFFFGAYFV). The Extracellular segment spans residues 987–1000 (FENTTVTSNGQIFG). Residues 1001 to 1023 (NWTFGTLVFTVMVFTVTLKLALD) form a helical membrane-spanning segment. Over 1024 to 1029 (THYWTW) the chain is Cytoplasmic. The chain crosses the membrane as a helical span at residues 1030–1050 (INHFVIWGSLLFYVVFSLLWG). The Extracellular segment spans residues 1051 to 1068 (GVIWPFLNYQRMYYVFIQ). A helical membrane pass occupies residues 1069-1093 (MLSSGPAWLAIVLLVTISLLPDVLK). The Cytoplasmic portion of the chain corresponds to 1094–1134 (KVLCRQLWPTATERVQTKSQCLSVEQSTIFMLSQTSSSLSF).

It belongs to the cation transport ATPase (P-type) (TC 3.A.3) family. Type IV subfamily. As to quaternary structure, component of a P4-ATPase flippase complex which consists of a catalytic alpha subunit ATP11A and an accessory beta subunit TMEM30A. It depends on Mg(2+) as a cofactor. In terms of processing, proteolytically cleaved by CASP3. Widely expressed. Expressed in myoblasts.

It localises to the cell membrane. The protein resides in the early endosome. Its subcellular location is the recycling endosome. The protein localises to the endoplasmic reticulum membrane. The enzyme catalyses ATP + H2O + phospholipidSide 1 = ADP + phosphate + phospholipidSide 2.. The catalysed reaction is a 1,2-diacyl-sn-glycero-3-phospho-L-serine(out) + ATP + H2O = a 1,2-diacyl-sn-glycero-3-phospho-L-serine(in) + ADP + phosphate + H(+). It catalyses the reaction a 1,2-diacyl-sn-glycero-3-phosphoethanolamine(out) + ATP + H2O = a 1,2-diacyl-sn-glycero-3-phosphoethanolamine(in) + ADP + phosphate + H(+). With respect to regulation, the flippase activity is inactivated by caspase-mediated cleavage in apoptotic cells, allowing for PS exposure on the cell surface and engulfment of apoptotic cells by macrophages. The ATPase activity is up-regulated by aminophospholipids PS and PE and down-regulated by increasing intracellular Ca2+ levels. Functionally, catalytic component of a P4-ATPase flippase complex which catalyzes the hydrolysis of ATP coupled to the transport of aminophospholipids, phosphatidylserines (PS) and phosphatidylethanolamines (PE), from the outer to the inner leaflet of the plasma membrane. Does not show flippase activity toward phosphatidylcholine (PC). Contributes to the maintenance of membrane lipid asymmetry with a specific role in morphogenesis of muscle cells. In myoblasts, mediates PS enrichment at the inner leaflet of plasma membrane, triggering PIEZO1-dependent Ca2+ influx and Rho GTPases signal transduction, subsequently leading to the assembly of cortical actomyosin fibers and myotube formation. May be involved in the uptake of farnesyltransferase inhibitor drugs, such as lonafarnib. This is Phospholipid-transporting ATPase IH (ATP11A) from Homo sapiens (Human).